A 401-amino-acid polypeptide reads, in one-letter code: Heat shock transcription factor, Y-linked (401 aa).

The span at 1-11 (MAHVSSETQDV) shows a compositional bias: polar residues. Residues 1–30 (MAHVSSETQDVSPKDELTASEASTRSPLCE) form a disordered region. A DNA-binding region spans residues 76-194 (LSLNFPRKLW…PQLLVRVKRR (119 aa)).

Belongs to the HSF family. As to expression, testis-specific. Present in Sertoli cells and spermatogenic cells (at protein level).

Its subcellular location is the nucleus. The protein localises to the cytoplasm. This chain is Heat shock transcription factor, Y-linked (HSFY1), found in Homo sapiens (Human).